The primary structure comprises 316 residues: N-acetylmuramic acid 6-phosphate etherase (316 aa).

The region spanning 68 to 231 (ITDRLRSGGR…STCAMVRLGK (164 aa)) is the SIS domain. Catalysis depends on E96, which acts as the Proton donor. E127 is a catalytic residue.

It belongs to the GCKR-like family. MurNAc-6-P etherase subfamily. As to quaternary structure, homodimer.

It catalyses the reaction N-acetyl-D-muramate 6-phosphate + H2O = N-acetyl-D-glucosamine 6-phosphate + (R)-lactate. It participates in amino-sugar metabolism; N-acetylmuramate degradation. In terms of biological role, specifically catalyzes the cleavage of the D-lactyl ether substituent of MurNAc 6-phosphate, producing GlcNAc 6-phosphate and D-lactate. The polypeptide is N-acetylmuramic acid 6-phosphate etherase (Prochlorococcus marinus (strain MIT 9303)).